We begin with the raw amino-acid sequence, 437 residues long: Zinc finger protein 491 (437 aa).

The segment at K35 to D59 adopts a C2H2-type 1; degenerate zinc-finger fold. A C2H2-type 2; degenerate zinc finger spans residues F103–H125. C2H2-type zinc fingers lie at residues Y131–H153, Y159–H181, Y187–H209, Y215–H237, Y243–H265, H271–H293, Y299–H321, D327–H349, Y355–H377, Y383–H405, and Y411–H433.

The protein belongs to the krueppel C2H2-type zinc-finger protein family.

Its subcellular location is the nucleus. Functionally, may be involved in transcriptional regulation. This is Zinc finger protein 491 (ZNF491) from Homo sapiens (Human).